A 431-amino-acid chain; its full sequence is Probable carboxylic ester hydrolase LipM (431 aa).

3 helical membrane-spanning segments follow: residues 7–27, 38–58, and 75–95; these read IHVI…AATI, FASL…LPTL, and PVRA…LNLS. Active-site residues include S261, D357, and H390.

This sequence belongs to the 'GDXG' lipolytic enzyme family.

It is found in the membrane. This Mycobacterium tuberculosis (strain ATCC 25618 / H37Rv) protein is Probable carboxylic ester hydrolase LipM.